A 30-amino-acid chain; its full sequence is Dendrotoxin B (30 aa).

A disulfide bridge links Cys3 with Cys22.

The protein belongs to the three-finger toxin family. Short-chain subfamily. Orphan group XI sub-subfamily. Contains 4 disulfide bonds. As to expression, expressed by the venom gland.

The protein localises to the secreted. Its function is as follows. Blocks voltage-gated potassium channels (Kv). This is the slowly inactivating phase of potassium efflux which is blocked by this toxin. The polypeptide is Dendrotoxin B (Dendroaspis angusticeps (Eastern green mamba)).